We begin with the raw amino-acid sequence, 467 residues long: Palmitoyltransferase ZDHHC18-A (467 aa).

The Cytoplasmic portion of the chain corresponds to 1 to 59; it reads MKNCEYQQIDPRALRTPSSRTSSTLPCGRKGSQRLRRKWEVFPGKNRFYCDGRIMLARQ. A helical membrane pass occupies residues 60 to 80; that stretch reads CGVLPLTIGLIFITSVLFFTF. The Lumenal portion of the chain corresponds to 81-88; it reads DCPFLVDH. Residues 89–109 traverse the membrane as a helical segment; the sequence is LTVFIPVIGGVLFIFVVISLL. At 110–204 the chain is on the cytoplasmic side; sequence QTSFTDPGIL…GNCVGKRNYR (95 aa). Residues 161–211 enclose the DHHC domain; sequence KYCFTCKMFRPPRTSHCSLCDNCVERFDHHCPWVGNCVGKRNYRFFYAFIV. Catalysis depends on cysteine 191, which acts as the S-palmitoyl cysteine intermediate. The helical transmembrane segment at 205–225 threads the bilayer; that stretch reads FFYAFIVSLSFLTSFIFGCVI. At 226–247 the chain is on the lumenal side; that stretch reads THLTLRSQGGNGFIQAIQDSPA. A helical membrane pass occupies residues 248 to 268; it reads SVVELVICFFSIWSILGLSGF. Residues 269–467 are Cytoplasmic-facing; the sequence is HTYLVASNLT…APDMGFIPLN (199 aa).

It belongs to the DHHC palmitoyltransferase family. ERF2/ZDHHC9 subfamily.

The protein localises to the golgi apparatus membrane. It catalyses the reaction L-cysteinyl-[protein] + hexadecanoyl-CoA = S-hexadecanoyl-L-cysteinyl-[protein] + CoA. Its function is as follows. Palmitoyltransferase that catalyzes the addition of palmitate onto various protein substrates, such as CGAS, HRAS and LCK. This is Palmitoyltransferase ZDHHC18-A from Danio rerio (Zebrafish).